The primary structure comprises 185 residues: MNKQKFYTNLSKEVSYALRHAQWKYELELDENGWVSVEQLLHALHQSIEWRDVKIEDLKIMIEKSEKKRHELKENKIRALYGHSIPMKIVKEEGVPPEFLYHGTSPRFLNSIESNGLSPMSRQYVHLSEDIITAELVGKRKDKHPIILEVNTGKAREEGVKFYLGNEKVWLADEIPSEFIAINKN.

It belongs to the KptA/TPT1 family.

Functionally, removes the 2'-phosphate from RNA via an intermediate in which the phosphate is ADP-ribosylated by NAD followed by a presumed transesterification to release the RNA and generate ADP-ribose 1''-2''-cyclic phosphate (APPR&gt;P). May function as an ADP-ribosylase. In Bacillus thuringiensis subsp. konkukian (strain 97-27), this protein is Probable RNA 2'-phosphotransferase.